Here is a 481-residue protein sequence, read N- to C-terminus: MSIQVHDTLTAQKRELVPLEPGKLRLYVCGPTVYDYSHLGHARCYVVWDVVVRHLRARGLEVRFVRNFTDVDDKIIQRANERGEDPIALASRFADAFHEDMDALGNLRPDVEPRVSGHIPEIVALIARLVERGFAYAPGNGDVYYAVRKFPEYGRLSKRNLDDLIAGARVEPGEAKRDPLDFALWKAAKPGEPAWDSPWGKGRPGWHIECSAMTQKHLGAPIDLHAGGKDLVFPHHTNEIAQSVAATSDGLHAEDFARYWMHNGFVQIDDEKMSKSLGNFFTIRDVLARFDGEALRFFLLGTHYRRDFNFSDQVLAEAERRLSALYETVEKAERLGAGVEPGAEPAFVERARAALDDDFNTPQVLGIVAEAFTEANALADRKGKKSPEEKARLAAFARGARAVGAVLGILGRPPAQALSAIRDRAAARRGIDGSEVERLIAERAAARAAKDFARSDAIRDGLLARGVVLMDGPQGTTWKVE.

Cys29 contacts Zn(2+). A 'HIGH' region motif is present at residues 31–41; sequence PTVYDYSHLGH. Zn(2+) contacts are provided by Cys210, His235, and Glu239. The short motif at 272 to 276 is the 'KMSKS' region element; sequence KMSKS. Lys275 provides a ligand contact to ATP.

Belongs to the class-I aminoacyl-tRNA synthetase family. As to quaternary structure, monomer. Requires Zn(2+) as cofactor.

Its subcellular location is the cytoplasm. The enzyme catalyses tRNA(Cys) + L-cysteine + ATP = L-cysteinyl-tRNA(Cys) + AMP + diphosphate. This is Cysteine--tRNA ligase from Anaeromyxobacter dehalogenans (strain 2CP-C).